The sequence spans 690 residues: F-box/LRR-repeat protein 5 (690 aa).

A hemerythrin-like region spans residues 1-159 (MAPFPDEVDV…IKKKVIAQHC (159 aa)). Positions 15, 57, 58, 61, 80, 126, and 130 each coordinate Fe(3+). In terms of domain architecture, F-box spans 202 to 248 (STGITHLPPEVMLSIFSYLNPQELCRCSQVSTKWSQLAKTGSLWKHL). 7 LRR repeats span residues 340 to 364 (SSAV…LDLT), 365 to 392 (QTDI…DLSG), 393 to 418 (CEKI…QSGF), 478 to 507 (VWML…CVME), 575 to 606 (TTLP…SLSG), 607 to 634 (CYQI…NLSG), and 635 to 660 (CLTV…YFYY). Residues cysteine 661, cysteine 675, cysteine 685, and cysteine 686 each coordinate [2Fe-2S] cluster.

Part of a SCF (SKP1-cullin-F-box) protein ligase complex. Interacts with ACO1/IRP1, IREB2/IRP2; the interaction depends on the [2Fe-2S] cluster. Interacts with DCTN1/p150-glued. The cofactor is [2Fe-2S] cluster. Polybiquitinated upon iron and oxygen depletion, leading to its degradation by the proteasome. Ubiquitination is regulated by the hemerythrin-like region that acts as an oxygen and iron sensor. Undergoes constitutive ubiquitin-dependent degradation at the steady state by HERC2. As to expression, ubiquitously expressed. Highly expressed in early embryogenesis with expression decreasing as the embryo progresses through development (E11 and E15).

The protein resides in the cytoplasm. The protein localises to the perinuclear region. It is found in the nucleus. It functions in the pathway protein modification; protein ubiquitination. Its activity is regulated as follows. An iron-sulfur cluster promotes IRP2 polyubiquitination and degradation in response to both iron and oxygen concentrations. Component of some SCF (SKP1-cullin-F-box) protein ligase complex that plays a central role in iron homeostasis by promoting the ubiquitination and subsequent degradation of IREB2/IRP2. The C-terminal domain of FBXL5 contains a redox-sensitive [2Fe-2S] cluster that, upon oxidation, promotes binding to IRP2 to effect its oxygen-dependent degradation. Under iron deficiency conditions, the N-terminal hemerythrin-like (Hr) region, which contains a diiron metal center, cannot bind iron and undergoes conformational changes that destabilize the FBXL5 protein and cause its ubiquitination and degradation. When intracellular iron levels start rising, the Hr region is stabilized. Additional increases in iron levels facilitate the assembly and incorporation of a redox active [2Fe-2S] cluster in the C-terminal domain. Only when oxygen level is high enough to maintain the cluster in its oxidized state can FBXL5 recruit IRP2 as a substrate for polyubiquination and degradation. Promotes ubiquitination and subsequent degradation of the dynactin complex component DCTN1. Within the nucleus, promotes the ubiquitination of SNAI1; preventing its interaction with DNA and promoting its degradation. Negatively regulates DNA damage response by mediating the ubiquitin-proteasome degradation of the DNA repair protein NABP2. This chain is F-box/LRR-repeat protein 5 (Fbxl5), found in Mus musculus (Mouse).